Here is a 122-residue protein sequence, read N- to C-terminus: Basic phospholipase A2 Cdr-13 (122 aa).

Intrachain disulfides connect cysteine 26–cysteine 115, cysteine 28–cysteine 44, cysteine 43–cysteine 95, cysteine 49–cysteine 122, cysteine 50–cysteine 88, cysteine 57–cysteine 81, and cysteine 75–cysteine 86. Ca(2+)-binding residues include tyrosine 27, glycine 29, and glycine 31. Residue histidine 47 is part of the active site. Aspartate 48 contacts Ca(2+). Aspartate 89 is a catalytic residue.

The cofactor is Ca(2+). Expressed by the venom gland.

It localises to the secreted. The enzyme catalyses a 1,2-diacyl-sn-glycero-3-phosphocholine + H2O = a 1-acyl-sn-glycero-3-phosphocholine + a fatty acid + H(+). In terms of biological role, snake venom phospholipase A2 (PLA2) that induces myonecrosis and edema upon subcutaneous injections in mice. In vitro, causes a potent blockade of neuromuscular transmission in young chicken biventer cervicis preparation and produces cytotoxicity in murine C2C12 skeletal muscle myotubes and lack cytolytic activity upon myoblasts in vitro. PLA2 catalyzes the calcium-dependent hydrolysis of the 2-acyl groups in 3-sn-phosphoglycerides. The polypeptide is Basic phospholipase A2 Cdr-13 (Crotalus durissus ruruima (South American rattlesnake)).